The sequence spans 411 residues: Intracellular hyaluronan-binding protein 4 (411 aa).

Phosphoserine is present on residues S7 and S36. The stretch at 42-62 (LREAEHRRQQQLQRKRRDEAA) forms a coiled coil. Residues 42–271 (LREAEHRRQQ…ECQGTLDEES (230 aa)) are disordered. R70 carries the omega-N-methylarginine modification. Position 74 is a phosphoserine (S74). Positions 87 to 97 (GRRESQKERKS) are enriched in basic and acidic residues. Residue S108 is modified to Phosphoserine. Basic and acidic residues-rich tracts occupy residues 138–181 (VLER…DRPL) and 205–229 (DSFDQRGKRDFERYSSNDKTNRMED). Glycyl lysine isopeptide (Lys-Gly) (interchain with G-Cter in SUMO1); alternate cross-links involve residues K212 and K274. Glycyl lysine isopeptide (Lys-Gly) (interchain with G-Cter in SUMO2); alternate cross-links involve residues K212 and K274. Residues 279 to 301 (EVEEENQVQEMTLDEWKNLQEQT) adopt a coiled-coil conformation. Positions 296–313 (NLQEQTRPKPEFNIRKPE) are enriched in basic and acidic residues. The tract at residues 296-318 (NLQEQTRPKPEFNIRKPESTVPS) is disordered. K334 is covalently cross-linked (Glycyl lysine isopeptide (Lys-Gly) (interchain with G-Cter in SUMO1); alternate). Residue K334 forms a Glycyl lysine isopeptide (Lys-Gly) (interchain with G-Cter in SUMO2); alternate linkage. 2 positions are modified to phosphothreonine; by PKC: T352 and T373. Positions 358–411 (NFGNLPRPGRGARGSTRGGRGRMRRTENYGPRAEVVTQDVAPNPDDPEDFPALA) are disordered. Positions 402–411 (DDPEDFPALA) are enriched in acidic residues.

Belongs to the SERBP1-HABP4 family. Associates with ribosomes; promoting ribosome stabilization. Interacts with EEF2/eEF2; promoting ribosome stabilization. Interacts with FMR1. Interacts with FXR1 and FXR2. Interacts with CHD3 (via C-terminus). Interacts (via C-terminus) with RACK1. Interacts with p53/TP53. Interacts (via N-terminus) with SRSF9; this interaction is direct. Interacts with SYNCRIP; this interaction is direct. Interacts with MEF2C (via N-terminus); this interaction decreases DNA-binding activity of MEF2C in myocardial cells in response to mechanical stress. Interacts with PRMT1 (via N-terminus). Interacts with SPIN1. Post-translationally, phosphorylated by phorbol 12-myristate 13-acetate (PMA)-activated PKC isoforms at Thr-352 and Thr-373. Methylated. Methylation is decreased by phorbol 12-myristate 13-acetate (PMA)-activated PKC, in vitro. Expressed in adult heart, brain, liver, kidney, testis, and in various embryonic tissues, but not in adult spleen, lung or skeletal muscle.

The protein resides in the nucleus. It is found in the cytoplasm. It localises to the stress granule. The protein localises to the sarcoplasm. Its subcellular location is the nuclear body. The protein resides in the nucleolus. It is found in the nucleus speckle. It localises to the cajal body. The protein localises to the gem. In terms of biological role, ribosome-binding protein that promotes ribosome hibernation, a process during which ribosomes are stabilized in an inactive state and preserved from proteasomal degradation. Acts via its association with EEF2/eEF2 factor at the A-site of the ribosome, promoting ribosome stabilization in an inactive state compatible with storage. Plays a key role in ribosome hibernation in the mature oocyte by promoting ribosome stabilization. Ribosomes, which are produced in large quantities during oogenesis, are stored and translationally repressed in the oocyte and early embryo. Also binds RNA, regulating transcription and pre-mRNA splicing. Binds (via C-terminus) to poly(U) RNA. Seems to play a role in PML-nuclear bodies formation. Negatively regulates DNA-binding activity of the transcription factor MEF2C in myocardial cells in response to mechanical stress. The polypeptide is Intracellular hyaluronan-binding protein 4 (Mus musculus (Mouse)).